A 519-amino-acid polypeptide reads, in one-letter code: Na(+)/H(+) exchange regulatory cofactor NHE-RF3 (519 aa).

3 PDZ domains span residues 9–90, 134–215, and 243–323; these read ECKL…LDGD, RLCY…VDKE, and IVEM…VDKE. Ser148, Ser192, Ser250, Ser334, and Ser348 each carry phosphoserine. A disordered region spans residues 347 to 374; the sequence is GSVKEAPAPTPTSLEVSSPPDTTEEVDH. A compositionally biased stretch (polar residues) spans 357–367; it reads PTSLEVSSPPD. One can recognise a PDZ 4 domain in the interval 378 to 458; sequence LCRLAKGENG…NVTLLVCGKK (81 aa). At Thr451 the chain carries Phosphothreonine. The interval 473 to 519 is disordered; that stretch reads SLADPPDTPPDSKEGIVVESKHDSHMAKERAHSTASHSSSNSEDTEM. The span at 482–504 shows a compositional bias: basic and acidic residues; sequence PDSKEGIVVESKHDSHMAKERAH. A phosphoserine mark is found at Ser492, Ser508, Ser510, Ser511, Ser512, and Ser514. Positions 505–519 are enriched in low complexity; that stretch reads STASHSSSNSEDTEM.

This sequence belongs to the NHER family. Interacts with PDZK1IP1 and ABCC2. Binds to the C-terminal region of SLC26A3. Interacts (via PDZ domains 1 and 3) with SCARB1 (C-terminal domain). Forms a heterodimeric complex with NHERF1. Interacts with AKAP2, BCR, CFTR, SLCO1A1, SLC22A12, SLC22A4, SLC22A5, NHERF2 and SLC17A1. Component of a complex, composed of PDZK1, SYNGAP1, KLHL17 and NMDA receptors. Interacts (via PDZ1 domain) directly with KLHL17; the interaction is important for integrity of actin cytoskeleton structures in neurons. Interacts (via C-terminal PDZ domain) with SLC26A6 (via C-terminal domain). Interacts (via C-terminal PDZ domain) with SLC9A3 (via C-terminal domain). Interacts (via the first PDZ domain) with PTGIR (via non-isoprenylated C-terminus). Interacts (via PDZ domains 1 and 3) with SLC5A8 (via PDZ-binding motif); interaction increases nicotinate transport activity of SLC5A8.

It localises to the membrane. Its subcellular location is the cell membrane. Functionally, a scaffold protein that connects plasma membrane proteins and regulatory components, regulating their surface expression in epithelial cells apical domains. May be involved in the coordination of a diverse range of regulatory processes for ion transport and second messenger cascades. In complex with NHERF1, may cluster proteins that are functionally dependent in a mutual fashion and modulate the trafficking and the activity of the associated membrane proteins. May play a role in the cellular mechanisms associated with multidrug resistance through its interaction with ABCC2 and PDZK1IP1. May potentiate the CFTR chloride channel activity. Required for normal cell-surface expression of SCARB1. Plays a role in maintaining normal plasma cholesterol levels via its effects on SCARB1. Plays a role in the normal localization and function of the chloride-anion exchanger SLC26A6 to the plasma membrane in the brush border of the proximal tubule of the kidney. May be involved in the regulation of proximal tubular Na(+)-dependent inorganic phosphate cotransport therefore playing an important role in tubule function. This is Na(+)/H(+) exchange regulatory cofactor NHE-RF3 (PDZK1) from Pongo abelii (Sumatran orangutan).